The following is a 133-amino-acid chain: Interleukin-4 (133 aa).

Residues 1–24 (MGLTSQLIPTLVCLLVCTSNFAHG) form the signal peptide. 3 disulfide bridges follow: cysteine 27–cysteine 133, cysteine 48–cysteine 85, and cysteine 70–cysteine 105. N-linked (GlcNAc...) asparagine glycans are attached at residues asparagine 62, asparagine 96, asparagine 102, and asparagine 108.

The protein belongs to the IL-4/IL-13 family.

The protein resides in the secreted. In terms of biological role, participates in at least several B-cell activation processes as well as of other cell types. It is a costimulator of DNA-synthesis. It induces the expression of class II MHC molecules on resting B-cells. It enhances both secretion and cell surface expression of IgE and IgG1. It also regulates the expression of the low affinity Fc receptor for IgE (CD23) on both lymphocytes and monocytes. Positively regulates IL31RA expression in macrophages. Stimulates autophagy in dendritic cells by interfering with mTORC1 signaling and through the induction of RUFY4. The polypeptide is Interleukin-4 (IL4) (Lama glama (Llama)).